The sequence spans 144 residues: Cytochrome c-type biogenesis protein CcmE (144 aa).

Over 1 to 7 the chain is Cytoplasmic; sequence MTRKQKR. The helical; Signal-anchor for type II membrane protein transmembrane segment at 8 to 28 threads the bilayer; that stretch reads LAVIGSGMGFLALAAALTFYA. The Periplasmic portion of the chain corresponds to 29–144; the sequence is LGQQTSYFYM…LKKDGLWQEQ (116 aa). H122 and Y126 together coordinate heme.

The protein belongs to the CcmE/CycJ family.

The protein resides in the cell inner membrane. In terms of biological role, heme chaperone required for the biogenesis of c-type cytochromes. Transiently binds heme delivered by CcmC and transfers the heme to apo-cytochromes in a process facilitated by CcmF and CcmH. This chain is Cytochrome c-type biogenesis protein CcmE, found in Chelativorans sp. (strain BNC1).